A 95-amino-acid polypeptide reads, in one-letter code: UPF0358 protein BA_4159/GBAA_4159/BAS3861 (95 aa).

This sequence belongs to the UPF0358 family.

The sequence is that of UPF0358 protein BA_4159/GBAA_4159/BAS3861 from Bacillus anthracis.